A 1363-amino-acid chain; its full sequence is Spike glycoprotein (1363 aa).

A signal peptide spans 1 to 13 (MFLILLISLPMAF). At 14-1307 (AVIGDLKCTT…GTYEYYVKWP (1294 aa)) the chain is on the extracellular side. In terms of domain architecture, BetaCoV S1-NTD spans 15–298 (VIGDLKCTTV…DFMSEIKCKT (284 aa)). Cystine bridges form between Cys-21–Cys-165, Cys-160–Cys-193, Cys-172–Cys-252, Cys-286–Cys-296, and Cys-331–Cys-356. 2 N-linked (GlcNAc...) asparagine; by host glycosylation sites follow: Asn-59 and Asn-133. Asn-198 is a glycosylation site (N-linked (GlcNAc...) asparagine; by host). The BetaCoV S1-CTD domain maps to 329–617 (PDCNIEAWLN…DVNSGTTCST (289 aa)). The N-linked (GlcNAc...) asparagine; by host glycan is linked to Asn-359. Intrachain disulfides connect Cys-374–Cys-427 and Cys-386–Cys-615. N-linked (GlcNAc...) asparagine; by host glycosylation is found at Asn-437, Asn-649, Asn-676, Asn-696, Asn-714, Asn-739, and Asn-788. 2 fusion peptide regions span residues 914–935 (SAIEDLLFSKVKLSDVGFVEAY) and 933–953 (EAYNNCTGGAEIRDLICVQSY). Asn-937 carries N-linked (GlcNAc...) asparagine; by host glycosylation. An intrachain disulfide couples Cys-938 to Cys-949. A heptad repeat 1 region spans residues 1014–1064 (QKLIANAFNNALDAIQEGFDATNSALVKIQAVVNANAEALNNLLQQLSNRF). Residues 1043 to 1087 (QAVVNANAEALNNLLQQLSNRFGAISSSLQEILSRLDALEAQAQI) are a coiled coil. Residues Asn-1194, Asn-1224, Asn-1234, Asn-1253, Asn-1267, and Asn-1288 are each glycosylated (N-linked (GlcNAc...) asparagine; by host). The tract at residues 1258–1296 (APDLSLDYINVTFLDLQDEMNRLQEAIKVLNQSYINLKD) is heptad repeat 2. A coiled-coil region spans residues 1269–1297 (TFLDLQDEMNRLQEAIKVLNQSYINLKDI). The helical transmembrane segment at 1308–1328 (WYVWLLIGFAGVAMLVLLFFI) threads the bilayer. Residues 1329–1363 (CCCTGCGTSCFKICGGCCDDYTGHQELVIKTSHDD) are Cytoplasmic-facing. The short motif at 1359 to 1363 (TSHDD) is the KxHxx element.

This sequence belongs to the betacoronaviruses spike protein family. Homotrimer; each monomer consists of a S1 and a S2 subunit. The resulting peplomers protrude from the virus surface as spikes. Specific enzymatic cleavages in vivo yield mature proteins. The precursor is processed into S1 and S2 by host cell furin or another cellular protease to yield the mature S1 and S2 proteins. Additionally, a second cleavage leads to the release of a fusion peptide after viral attachment to host cell receptor. In terms of processing, the cytoplasmic Cys-rich domain is palmitoylated. Spike glycoprotein is digested within host endosomes.

It localises to the virion membrane. The protein resides in the host endoplasmic reticulum-Golgi intermediate compartment membrane. The protein localises to the host cell membrane. Attaches the virion to the cell membrane by interacting with host receptor, initiating the infection. Functionally, mediates fusion of the virion and cellular membranes by acting as a class I viral fusion protein. Under the current model, the protein has at least three conformational states: pre-fusion native state, pre-hairpin intermediate state, and post-fusion hairpin state. During viral and target cell membrane fusion, the coiled coil regions (heptad repeats) assume a trimer-of-hairpins structure, positioning the fusion peptide in close proximity to the C-terminal region of the ectodomain. The formation of this structure appears to drive apposition and subsequent fusion of viral and target cell membranes. In terms of biological role, acts as a viral fusion peptide which is unmasked following S2 cleavage occurring upon virus endocytosis. The polypeptide is Spike glycoprotein (Bos taurus (Bovine)).